Here is a 180-residue protein sequence, read N- to C-terminus: NADH-quinone oxidoreductase subunit I (180 aa).

4Fe-4S ferredoxin-type domains follow at residues 48 to 80 and 90 to 119; these read IVLT…LQKA and EFFR…LTPD. C60, C63, C66, C70, C99, C102, C105, and C109 together coordinate [4Fe-4S] cluster. Positions 161 to 174 are enriched in basic and acidic residues; that stretch reads KPKGDAEHEAKPID. Positions 161 to 180 are disordered; that stretch reads KPKGDAEHEAKPIDVKSLLP.

This sequence belongs to the complex I 23 kDa subunit family. In terms of assembly, NDH-1 is composed of 14 different subunits. Subunits NuoA, H, J, K, L, M, N constitute the membrane sector of the complex. It depends on [4Fe-4S] cluster as a cofactor.

It localises to the cell inner membrane. The enzyme catalyses a quinone + NADH + 5 H(+)(in) = a quinol + NAD(+) + 4 H(+)(out). Its function is as follows. NDH-1 shuttles electrons from NADH, via FMN and iron-sulfur (Fe-S) centers, to quinones in the respiratory chain. The immediate electron acceptor for the enzyme in this species is believed to be ubiquinone. Couples the redox reaction to proton translocation (for every two electrons transferred, four hydrogen ions are translocated across the cytoplasmic membrane), and thus conserves the redox energy in a proton gradient. This is NADH-quinone oxidoreductase subunit I from Aeromonas salmonicida (strain A449).